Consider the following 406-residue polypeptide: MPQGETFHRAVSNVLFISQIYGLLPVSNVRALDVADIRFRWCSPRILYSLLIGILNLSEFGAVINYVIKVTINFHTSSTLSLYIVCLLEHLFFWRLAIQWPRIMRTWHGVEQLFLRVPYRFYGEYRIKRRIYIVFTIVMSSALVEHCLLLGNSFHLSNMERTQCKINVTYFESIYKWERPHLYMILPYHFWMLPILEWVNQTIAYPRSFTDCFIMCIGIGLAARFHQLYRRIAAVHRKVMPAVFWTEVREHYLALKRLVHLLDAAIAPLVLLAFGNNMSFICFQLFNSFKNIGVDFLVMLAFWYSLGFAVVRTLLTIFVASSINDYERKIVTALRDVPSRAWSIEVQRFSEQLGNDTTALSGSGFFYLTRSLVLAMGTTIITYELMISDVINQGSIRQKTQYCREY.

At 1-47 (MPQGETFHRAVSNVLFISQIYGLLPVSNVRALDVADIRFRWCSPRIL) the chain is on the cytoplasmic side. A helical transmembrane segment spans residues 48–68 (YSLLIGILNLSEFGAVINYVI). Over 69–79 (KVTINFHTSST) the chain is Extracellular. The chain crosses the membrane as a helical span at residues 80–100 (LSLYIVCLLEHLFFWRLAIQW). Residues 101–130 (PRIMRTWHGVEQLFLRVPYRFYGEYRIKRR) lie on the Cytoplasmic side of the membrane. Residues 131 to 151 (IYIVFTIVMSSALVEHCLLLG) form a helical membrane-spanning segment. Residues 152-183 (NSFHLSNMERTQCKINVTYFESIYKWERPHLY) are Extracellular-facing. Asn167 carries an N-linked (GlcNAc...) asparagine glycan. A helical membrane pass occupies residues 184-204 (MILPYHFWMLPILEWVNQTIA). Over 205 to 265 (YPRSFTDCFI…KRLVHLLDAA (61 aa)) the chain is Cytoplasmic. The chain crosses the membrane as a helical span at residues 266–286 (IAPLVLLAFGNNMSFICFQLF). The Extracellular portion of the chain corresponds to 287–290 (NSFK). Residues 291–311 (NIGVDFLVMLAFWYSLGFAVV) traverse the membrane as a helical segment. Topologically, residues 312–370 (RTLLTIFVASSINDYERKIVTALRDVPSRAWSIEVQRFSEQLGNDTTALSGSGFFYLTR) are cytoplasmic. A helical membrane pass occupies residues 371–391 (SLVLAMGTTIITYELMISDVI). The Extracellular segment spans residues 392 to 406 (NQGSIRQKTQYCREY).

Belongs to the insect chemoreceptor superfamily. Gustatory receptor (GR) family. Gr5a subfamily. In terms of tissue distribution, expressed in Gr5a-expressing sugar-sensing cells.

It is found in the cell membrane. In terms of biological role, one of the few identified sugar gustatory receptors identified so far and which promotes the starvation-induced increase of feeding motivation. The polypeptide is Gustatory receptor for sugar taste 64b (Gr64b) (Drosophila melanogaster (Fruit fly)).